Reading from the N-terminus, the 1146-residue chain is Ankyrin repeat domain-containing protein 24 (1146 aa).

5 ANK repeats span residues 81-110 (EGKS…NVMS), 114-143 (AGYN…VVDV), 147-176 (SGWT…HLNP), 180-209 (SGAT…AAND), and 213-242 (QGRT…QPGI). Disordered regions lie at residues 272–320 (RPSP…PDDR), 607–627 (REME…GAQA), and 766–785 (ERVR…GDTT). The segment covering 286-297 (EASSQNSMSSHG) has biased composition (polar residues). The stretch at 320 to 517 (RDAYEEIVRL…QALRQQETRE (198 aa)) forms a coiled coil. Residues 714 to 1110 (AAEASEKLQV…AARDHSSVVA (397 aa)) adopt a coiled-coil conformation.

Homodimer. Interacts (via C-terminal domain) with TRIOBP (via C-terminal domain) isoform 4; recruits TRIOBP isoform 4 to stereocilia rootlets.

Its subcellular location is the cell membrane. The protein localises to the cell projection. It localises to the stereocilium. In terms of biological role, component of the stereocilia rootlet in hair cells of inner ear. Bridges the apical plasma membrane with the lower rootlet and maintains normal distribution of TRIOBP, thereby reinforcing stereocilia insertion points and organizing rootlets for hearing with long-term resilience. The protein is Ankyrin repeat domain-containing protein 24 of Homo sapiens (Human).